A 330-amino-acid polypeptide reads, in one-letter code: Ketol-acid reductoisomerase (NADP(+)) (330 aa).

Residues methionine 1 to threonine 181 enclose the KARI N-terminal Rossmann domain. NADP(+) is bound by residues tyrosine 24–glutamine 27, arginine 47, serine 52, and aspartate 82–glutamine 85. Histidine 107 is an active-site residue. An NADP(+)-binding site is contributed by glycine 133. The KARI C-terminal knotted domain maps to threonine 182 to glutamine 327. The Mg(2+) site is built by aspartate 190, glutamate 194, glutamate 226, and glutamate 230. Residue serine 251 participates in substrate binding.

Belongs to the ketol-acid reductoisomerase family. Mg(2+) is required as a cofactor.

The enzyme catalyses (2R)-2,3-dihydroxy-3-methylbutanoate + NADP(+) = (2S)-2-acetolactate + NADPH + H(+). It carries out the reaction (2R,3R)-2,3-dihydroxy-3-methylpentanoate + NADP(+) = (S)-2-ethyl-2-hydroxy-3-oxobutanoate + NADPH + H(+). It participates in amino-acid biosynthesis; L-isoleucine biosynthesis; L-isoleucine from 2-oxobutanoate: step 2/4. Its pathway is amino-acid biosynthesis; L-valine biosynthesis; L-valine from pyruvate: step 2/4. Its function is as follows. Involved in the biosynthesis of branched-chain amino acids (BCAA). Catalyzes an alkyl-migration followed by a ketol-acid reduction of (S)-2-acetolactate (S2AL) to yield (R)-2,3-dihydroxy-isovalerate. In the isomerase reaction, S2AL is rearranged via a Mg-dependent methyl migration to produce 3-hydroxy-3-methyl-2-ketobutyrate (HMKB). In the reductase reaction, this 2-ketoacid undergoes a metal-dependent reduction by NADPH to yield (R)-2,3-dihydroxy-isovalerate. The sequence is that of Ketol-acid reductoisomerase (NADP(+)) from Methanosphaera stadtmanae (strain ATCC 43021 / DSM 3091 / JCM 11832 / MCB-3).